The sequence spans 72 residues: Peptide Ctri9194 (72 aa).

The first 23 residues, 1 to 23 (MKTQNVLLSFGIVFLMISFSSET), serve as a signal peptide directing secretion. I38 is modified (isoleucine amide). Positions 42-72 (SLKDVESLDFLFDPTFTAADLAVLENALEDY) are excised as a propeptide.

This sequence belongs to the non-disulfide-bridged peptide (NDBP) superfamily. Short antimicrobial peptide (group 4) family. Expressed by the venom gland.

The protein resides in the secreted. Its function is as follows. Antimicrobial peptide. The polypeptide is Peptide Ctri9194 (Chaerilus tricostatus (Scorpion)).